We begin with the raw amino-acid sequence, 307 residues long: Aspartate carbamoyltransferase catalytic subunit (307 aa).

The carbamoyl phosphate site is built by Arg56 and Thr57. Lys84 provides a ligand contact to L-aspartate. Residues Arg106, His136, and Gln139 each contribute to the carbamoyl phosphate site. Residues Arg169 and Arg221 each coordinate L-aspartate. Residues Ala262 and Pro263 each contribute to the carbamoyl phosphate site.

Belongs to the aspartate/ornithine carbamoyltransferase superfamily. ATCase family. As to quaternary structure, heterododecamer (2C3:3R2) of six catalytic PyrB chains organized as two trimers (C3), and six regulatory PyrI chains organized as three dimers (R2).

It carries out the reaction carbamoyl phosphate + L-aspartate = N-carbamoyl-L-aspartate + phosphate + H(+). It functions in the pathway pyrimidine metabolism; UMP biosynthesis via de novo pathway; (S)-dihydroorotate from bicarbonate: step 2/3. In terms of biological role, catalyzes the condensation of carbamoyl phosphate and aspartate to form carbamoyl aspartate and inorganic phosphate, the committed step in the de novo pyrimidine nucleotide biosynthesis pathway. In Streptococcus pneumoniae (strain P1031), this protein is Aspartate carbamoyltransferase catalytic subunit.